Here is a 122-residue protein sequence, read N- to C-terminus: Urocortin (122 aa).

Positions 1 to 25 (MIQRGRATLLVALLLLAQLRPESSQ) are cleaved as a signal peptide. The propeptide occupies 26 to 80 (WSPAAAAATGVQDPNLRWSPGVRNQGGGVRALLLLLAERFPRRAGSEPAGERQRR). Val-120 carries the post-translational modification Valine amide.

This sequence belongs to the sauvagine/corticotropin-releasing factor/urotensin I family. As to quaternary structure, interacts with CRHR1 and CRHR2 (via their N-terminal extracellular domain). In the organ of Corti, detected in the inner hair cell region (at protein level). Expressed in skin (at protein level).

The protein localises to the secreted. In terms of biological role, acts in vitro to stimulate the secretion of adrenocorticotropic hormone (ACTH). Binds with high affinity to CRF receptor types 1, 2-alpha, and 2-beta. Plays a role in the establishment of normal hearing thresholds. Reduces food intake and regulates ghrelin levels in gastric body and plasma. The protein is Urocortin (Ucn) of Mus musculus (Mouse).